The sequence spans 388 residues: Succinate--CoA ligase [ADP-forming] subunit beta (388 aa).

The ATP-grasp domain maps to 9–244 (KEILRKFGVA…LDEEDPAEIE (236 aa)). Residues K46, 53 to 55 (GRG), E99, A102, and E107 contribute to the ATP site. 2 residues coordinate Mg(2+): N199 and D213. Residues N264 and 321-323 (GIM) contribute to the substrate site.

The protein belongs to the succinate/malate CoA ligase beta subunit family. In terms of assembly, heterotetramer of two alpha and two beta subunits. Mg(2+) is required as a cofactor.

It catalyses the reaction succinate + ATP + CoA = succinyl-CoA + ADP + phosphate. It carries out the reaction GTP + succinate + CoA = succinyl-CoA + GDP + phosphate. Its pathway is carbohydrate metabolism; tricarboxylic acid cycle; succinate from succinyl-CoA (ligase route): step 1/1. In terms of biological role, succinyl-CoA synthetase functions in the citric acid cycle (TCA), coupling the hydrolysis of succinyl-CoA to the synthesis of either ATP or GTP and thus represents the only step of substrate-level phosphorylation in the TCA. The beta subunit provides nucleotide specificity of the enzyme and binds the substrate succinate, while the binding sites for coenzyme A and phosphate are found in the alpha subunit. This Burkholderia multivorans (strain ATCC 17616 / 249) protein is Succinate--CoA ligase [ADP-forming] subunit beta.